Here is a 259-residue protein sequence, read N- to C-terminus: Dihydroorotate dehydrogenase B (NAD(+)), electron transfer subunit (259 aa).

In terms of domain architecture, FAD-binding FR-type spans 2–102 (MQKQNMIVVN…LGPLGHGFPV (101 aa)). Residues 53–56 (RPIS), 70–72 (LYR), and 77–78 (GT) contribute to the FAD site. Residues Cys221, Cys226, Cys229, and Cys246 each coordinate [2Fe-2S] cluster.

This sequence belongs to the PyrK family. In terms of assembly, heterotetramer of 2 PyrK and 2 PyrD type B subunits. [2Fe-2S] cluster is required as a cofactor. The cofactor is FAD.

The protein operates within pyrimidine metabolism; UMP biosynthesis via de novo pathway; orotate from (S)-dihydroorotate (NAD(+) route): step 1/1. Its function is as follows. Responsible for channeling the electrons from the oxidation of dihydroorotate from the FMN redox center in the PyrD type B subunit to the ultimate electron acceptor NAD(+). This is Dihydroorotate dehydrogenase B (NAD(+)), electron transfer subunit from Bacillus cereus (strain Q1).